We begin with the raw amino-acid sequence, 123 residues long: Small ribosomal subunit protein uS13 (123 aa).

Residues 97-123 (PVRGQRTKTNARTRKGPRKTVGVRRKK) form a disordered region.

The protein belongs to the universal ribosomal protein uS13 family. As to quaternary structure, part of the 30S ribosomal subunit. Forms a loose heterodimer with protein S19. Forms two bridges to the 50S subunit in the 70S ribosome.

Located at the top of the head of the 30S subunit, it contacts several helices of the 16S rRNA. In the 70S ribosome it contacts the 23S rRNA (bridge B1a) and protein L5 of the 50S subunit (bridge B1b), connecting the 2 subunits; these bridges are implicated in subunit movement. Contacts the tRNAs in the A and P-sites. In Pelotomaculum thermopropionicum (strain DSM 13744 / JCM 10971 / SI), this protein is Small ribosomal subunit protein uS13.